Reading from the N-terminus, the 502-residue chain is AMP phosphorylase (502 aa).

Residues glycine 168, 195-200, and threonine 204 each bind AMP; that span reads SRAITS. The Proton donor role is filled by aspartate 257. The AMP site is built by serine 265 and lysine 289.

This sequence belongs to the thymidine/pyrimidine-nucleoside phosphorylase family. Type 2 subfamily.

The catalysed reaction is AMP + phosphate = alpha-D-ribose 1,5-bisphosphate + adenine. The enzyme catalyses CMP + phosphate = cytosine + alpha-D-ribose 1,5-bisphosphate. It catalyses the reaction UMP + phosphate = alpha-D-ribose 1,5-bisphosphate + uracil. In terms of biological role, catalyzes the conversion of AMP and phosphate to adenine and ribose 1,5-bisphosphate (R15P). Exhibits phosphorylase activity toward CMP and UMP in addition to AMP. Functions in an archaeal AMP degradation pathway, together with R15P isomerase and RubisCO. The chain is AMP phosphorylase from Hyperthermus butylicus (strain DSM 5456 / JCM 9403 / PLM1-5).